The following is a 275-amino-acid chain: Formamidopyrimidine-DNA glycosylase (275 aa).

The active-site Schiff-base intermediate with DNA is the Pro2. Glu3 acts as the Proton donor in catalysis. Lys58 acts as the Proton donor; for beta-elimination activity in catalysis. DNA-binding residues include His93, Arg111, and Arg156. The FPG-type zinc-finger motif lies at 241–275 (FVYDRAGEPCRVCGTPIRQIVQGQRSTYFCPTCQR). The active-site Proton donor; for delta-elimination activity is Arg265.

It belongs to the FPG family. As to quaternary structure, monomer. The cofactor is Zn(2+).

It carries out the reaction Hydrolysis of DNA containing ring-opened 7-methylguanine residues, releasing 2,6-diamino-4-hydroxy-5-(N-methyl)formamidopyrimidine.. The enzyme catalyses 2'-deoxyribonucleotide-(2'-deoxyribose 5'-phosphate)-2'-deoxyribonucleotide-DNA = a 3'-end 2'-deoxyribonucleotide-(2,3-dehydro-2,3-deoxyribose 5'-phosphate)-DNA + a 5'-end 5'-phospho-2'-deoxyribonucleoside-DNA + H(+). Its function is as follows. Involved in base excision repair of DNA damaged by oxidation or by mutagenic agents. Acts as a DNA glycosylase that recognizes and removes damaged bases. Has a preference for oxidized purines, such as 7,8-dihydro-8-oxoguanine (8-oxoG). Has AP (apurinic/apyrimidinic) lyase activity and introduces nicks in the DNA strand. Cleaves the DNA backbone by beta-delta elimination to generate a single-strand break at the site of the removed base with both 3'- and 5'-phosphates. The chain is Formamidopyrimidine-DNA glycosylase from Burkholderia multivorans (strain ATCC 17616 / 249).